Consider the following 886-residue polypeptide: Inter-alpha-trypsin inhibitor heavy chain H3 (886 aa).

The N-terminal stretch at 1 to 18 is a signal peptide; the sequence is MWWPYLVLALLSGLEASG. Residues 19-30 constitute a propeptide that is removed on maturation; it reads FPRSPLRLLGKR. One can recognise a VIT domain in the interval 26-155; the sequence is LLGKRSLPEG…KVTFELTYEE (130 aa). Residue asparagine 88 is glycosylated (N-linked (GlcNAc...) asparagine). Residues 279 to 439 form the VWFA domain; that stretch reads PKNIVFVIDI…YNFLETMALE (161 aa). An N-linked (GlcNAc...) asparagine glycan is attached at asparagine 577. The residue at position 646 (aspartate 646) is an Aspartate 1-(chondroitin 4-sulfate)-ester. A propeptide spanning residues 647–886 is cleaved from the precursor; sequence PHFIIQVPGK…HTDYIVPSLF (240 aa).

This sequence belongs to the ITIH family. In terms of assembly, I-alpha-I plasma protease inhibitors are assembled from one or two heavy chains (HC) and one light chain, bikunin. Pre-alpha-inhibitor (P-alpha-I) is composed of ITIH3/HC3 and bikunin. Post-translationally, heavy chains are linked to bikunin via chondroitin 4-sulfate esterified to the alpha-carboxyl of the C-terminal aspartate after propeptide cleavage.

It localises to the secreted. Functionally, may act as a carrier of hyaluronan in serum or as a binding protein between hyaluronan and other matrix protein, including those on cell surfaces in tissues to regulate the localization, synthesis and degradation of hyaluronan which are essential to cells undergoing biological processes. This chain is Inter-alpha-trypsin inhibitor heavy chain H3 (ITIH3), found in Mesocricetus auratus (Golden hamster).